A 458-amino-acid chain; its full sequence is Inner kinetochore subunit CHL4 (458 aa).

It belongs to the CENP-N/CHL4 family. As to quaternary structure, forms a heterodimer with IML3. CHL4-IML3 is part of a larger constitutive centromere-associated network (CCAN) (also known as central kinetochore CTF19 complex in yeast), which is composed of at least AME1, CHL4, CNN1, CTF3, CTF19, IML3, MCM16, MCM21, MCM22, MHF1, MHF2, MIF2, NKP1, NKP2, OKP1 and WIP1. Interacts with CTF3 and CTF19.

The protein localises to the nucleus. The protein resides in the chromosome. It is found in the centromere. Its subcellular location is the kinetochore. Its function is as follows. Component of the kinetochore, a multiprotein complex that assembles on centromeric DNA and attaches chromosomes to spindle microtubules, mediating chromosome segregation and sister chromatid segregation during meiosis and mitosis. Component of the inner kinetochore constitutive centromere-associated network (CCAN), which serves as a structural platform for outer kinetochore assembly. This Saccharomyces cerevisiae (strain ATCC 204508 / S288c) (Baker's yeast) protein is Inner kinetochore subunit CHL4 (CHL4).